A 663-amino-acid polypeptide reads, in one-letter code: Heparan-alpha-glucosaminide N-acetyltransferase (663 aa).

Positions 1–24 (MTGARASAAEQRRAGRSGQARAAE) are disordered. Residues 1–190 (MTGARASAAE…LAVNEDPVDS (190 aa)) are Lumenal, vesicle-facing. N-linked (GlcNAc...) asparagine glycosylation is found at asparagine 94, asparagine 142, and asparagine 162. An intrachain disulfide couples cysteine 151 to cysteine 462. The chain crosses the membrane as a helical span at residues 191–211 (NLPVSIAFLIGLAVIIVISFL). The Cytoplasmic portion of the chain corresponds to 212-275 (RLLLSLDDFN…PRLRSVDTFR (64 aa)). 2 positions are modified to phosphoserine: serine 243 and serine 245. Residues 276–296 (GIALILMVFVNYGGGKYWYFK) form a helical membrane-spanning segment. The active site involves histidine 297. The Lumenal, vesicle portion of the chain corresponds to 297 to 302 (HASWNG). The chain crosses the membrane as a helical span at residues 303–323 (LTVADLVFPWFVFIMGSSIFL). Over 324-345 (SMTSILQRGCSKFRLLGKIAWR) the chain is Cytoplasmic. Residues 346–366 (SFLLICIGIIIVNPNYCLGPL) traverse the membrane as a helical segment. Topologically, residues 367-374 (SWDKVRIP) are lumenal, vesicle. Residues 375–395 (GVLQRLGVTYFVVAVLELLFA) traverse the membrane as a helical segment. Over 396–420 (KPVPEHCASERSCLSLRDITSSWPQ) the chain is Cytoplasmic. A helical transmembrane segment spans residues 421-441 (WLLILVLEGLWLGLTFLLPVP). Residues 442 to 500 (GCPTGYLGPGGIGDFGKYPNCTGGAAGYIDRLLLGDDHLYQHPSSAVLYHTEVAYDPEG) are Lumenal, vesicle-facing. The chain crosses the membrane as a helical span at residues 501-521 (ILGTINSIVMAFLGVQAGKIL). At 522–529 (LYYKARTK) the chain is on the cytoplasmic side. The chain crosses the membrane as a helical span at residues 530 to 550 (DILIRFTAWCCILGLISVALT). The Lumenal, vesicle segment spans residues 551-564 (KVSENEGFIPVNKN). Residues 565–585 (LWSLSYVTTLSSFAFFILLVL) traverse the membrane as a helical segment. The Cytoplasmic portion of the chain corresponds to 586-592 (YPVVDVK). A helical transmembrane segment spans residues 593–613 (GLWTGTPFFYPGMNSILVYVG). At 614-634 (HEVFENYFPFQWKLKDNQSHK) the chain is on the lumenal, vesicle side. A lysosomal targeting region region spans residues 624–635 (QWKLKDNQSHKE). The helical transmembrane segment at 635-655 (EHLTQNIVATALWVLIAYILY) threads the bilayer. The Cytoplasmic segment spans residues 656–663 (RKKIFWKI).

Homooligomer. Homooligomerization is necessary for enzyme activity. Undergoes intralysosomal proteolytic cleavage; occurs within the end of the first and/or the beginning of the second luminal domain and is essential for the activation of the enzyme. Post-translationally, glycosylated. In terms of tissue distribution, widely expressed, with highest level in leukocytes, heart, liver, skeletal muscle, lung, placenta and liver.

It is found in the lysosome membrane. It catalyses the reaction alpha-D-glucosaminyl-[heparan sulfate](n) + acetyl-CoA = N-acetyl-alpha-D-glucosaminyl-[heparan sulfate](n) + CoA + H(+). In terms of biological role, lysosomal acetyltransferase that acetylates the non-reducing terminal alpha-glucosamine residue of intralysosomal heparin or heparan sulfate, converting it into a substrate for luminal alpha-N-acetyl glucosaminidase. This chain is Heparan-alpha-glucosaminide N-acetyltransferase (HGSNAT), found in Homo sapiens (Human).